The following is a 185-amino-acid chain: MIQDILKEAQDHMQKAIEVLKKEFATMRVGRATPALLEKVVVEYYGTQMPVNQLATISAPEPRLLVIQPWDKGALGAIEKAILKSDLGITPTNDGSVIRLAIPPLTQERRQELVKVARKKAEEARVAIRNIRRDANDRIKDLEKDKVISEDEGKRGQDEVQKLTDKFIKTVDELLKAKEDEILSI.

This sequence belongs to the RRF family.

It localises to the cytoplasm. Responsible for the release of ribosomes from messenger RNA at the termination of protein biosynthesis. May increase the efficiency of translation by recycling ribosomes from one round of translation to another. The protein is Ribosome-recycling factor of Carboxydothermus hydrogenoformans (strain ATCC BAA-161 / DSM 6008 / Z-2901).